The primary structure comprises 449 residues: Phosphoglucosamine mutase (449 aa).

Catalysis depends on serine 102, which acts as the Phosphoserine intermediate. Serine 102, aspartate 241, aspartate 243, and aspartate 245 together coordinate Mg(2+). Phosphoserine is present on serine 102.

Belongs to the phosphohexose mutase family. Mg(2+) serves as cofactor. In terms of processing, activated by phosphorylation.

The enzyme catalyses alpha-D-glucosamine 1-phosphate = D-glucosamine 6-phosphate. Functionally, catalyzes the conversion of glucosamine-6-phosphate to glucosamine-1-phosphate. The polypeptide is Phosphoglucosamine mutase (Roseobacter denitrificans (strain ATCC 33942 / OCh 114) (Erythrobacter sp. (strain OCh 114))).